The following is a 311-amino-acid chain: Aldose reductase B (311 aa).

13–23 (DIHHIPMIGLG) is an NADP(+) binding site. Residue Y54 is the Proton donor of the active site. H116 is a substrate binding site. Residue 219–273 (SPLGQGKCDLLSNETLKSIADKHNKTVANVIFKWLNQRGIVTIPKSSNPARIIEN) participates in NADP(+) binding.

It belongs to the aldo/keto reductase family.

The catalysed reaction is an alditol + NAD(+) = an aldose + NADH + H(+). It carries out the reaction an alditol + NADP(+) = an aldose + NADPH + H(+). Catalyzes the NADPH-dependent reduction of a wide variety of carbonyl-containing compounds to their corresponding alcohols with a broad range of catalytic efficiencies. The chain is Aldose reductase B (alrB) from Dictyostelium discoideum (Social amoeba).